We begin with the raw amino-acid sequence, 309 residues long: Probable HTH-type transcriptional regulator LtrA (309 aa).

The region spanning 1–61 (MNLNLLPDLA…QRTTRKLRLS (61 aa)) is the HTH lysR-type domain. Residues 21–40 (FSAVARQNGITPSAVSRSVS) constitute a DNA-binding region (H-T-H motif).

The protein belongs to the LysR transcriptional regulatory family.

The sequence is that of Probable HTH-type transcriptional regulator LtrA (ltrA) from Klebsiella pneumoniae.